The primary structure comprises 96 residues: MKIRPLHDRVLVKRQEVESKSAGGIVLTGSAAGKSTRGTVTAVGKGRVLDNGDIKPLDVKVGDVVIFNEGYGAKTEKIDNEELLILTESDILAIVE.

Belongs to the GroES chaperonin family. In terms of assembly, heptamer of 7 subunits arranged in a ring. Interacts with the chaperonin GroEL.

The protein resides in the cytoplasm. Together with the chaperonin GroEL, plays an essential role in assisting protein folding. The GroEL-GroES system forms a nano-cage that allows encapsulation of the non-native substrate proteins and provides a physical environment optimized to promote and accelerate protein folding. GroES binds to the apical surface of the GroEL ring, thereby capping the opening of the GroEL channel. The chain is Co-chaperonin GroES from Buchnera aphidicola subsp. Acyrthosiphon pisum (strain 5A).